Reading from the N-terminus, the 62-residue chain is Photosystem II reaction center protein Z (62 aa).

The next 2 membrane-spanning stretches (helical) occupy residues 8 to 28 and 41 to 61; these read AVFA…VVFA and FSGT…NSLI.

Belongs to the PsbZ family. In terms of assembly, PSII is composed of 1 copy each of membrane proteins PsbA, PsbB, PsbC, PsbD, PsbE, PsbF, PsbH, PsbI, PsbJ, PsbK, PsbL, PsbM, PsbT, PsbY, PsbZ, Psb30/Ycf12, at least 3 peripheral proteins of the oxygen-evolving complex and a large number of cofactors. It forms dimeric complexes.

It is found in the plastid. Its subcellular location is the chloroplast thylakoid membrane. May control the interaction of photosystem II (PSII) cores with the light-harvesting antenna, regulates electron flow through the 2 photosystem reaction centers. PSII is a light-driven water plastoquinone oxidoreductase, using light energy to abstract electrons from H(2)O, generating a proton gradient subsequently used for ATP formation. This chain is Photosystem II reaction center protein Z, found in Spinacia oleracea (Spinach).